We begin with the raw amino-acid sequence, 95 residues long: Small ribosomal subunit protein bS16 (95 aa).

It belongs to the bacterial ribosomal protein bS16 family.

The polypeptide is Small ribosomal subunit protein bS16 (Roseiflexus sp. (strain RS-1)).